The sequence spans 1342 residues: MLNIIYVVSLILIKFIFYKECNNNNNYYLSNIELYNYKLRKRNRILNNNINDRKSFLSDLEQNYKPLFDIYELSANFEKRRKELEKKTKGEENEIEKKKENDLEEKKENEIEKKKENDLEKEYNDVINLLELSLSSEYKELNADVSNNDNSGHEENNKHKLNKKNSSNYKNDKSLDELIKGAILKLKQNPNIKNKNMLDYDKIFKIIKEKLINKNLASNKIKGGDNEKLKEEKKQSDISTNVEVKKDIINDQLNKGIPTKIENKDDMINKESNKEDITNEGKSNSLNNLNTLNNDGNIITKVYDHYTIVTNSNDILNDISIDASDISKNSIGGINIPFNENDNSSFTHQRYIVLSNNGEKKYKIVLMTKNPKFMDMDGIYDEEEKKESLIELNQKVNKEENTNLYDGTGTLYYGKKSKKEKENTQQKGGNNPNVDINILNNNNNNNNNNNNNSNNNSNSMNDEEINYNNNNNKESPSMFRRFINFLSFSGNENETEDTLIYHNKNDNSYKNKKEGTGKNNDNNDPNNNNNKKILLNVDKLVDQYLLNLKNNHTSKQELILVLKGELDLHSKNMKNVINNAKKNLEKYFKEHFKEFDKISYDISTPINFLCIFIPTLFDMNNMDLLKQALLILHNDLHEYVENWSFSSTYHTYEADYIKEQDSVYDRSPKKKYIKASKKLYNNKYSFLNKFLNIEPLILFAKKLNSKRSNIEKEILNFLPKELRDYSTWNLSIIRVFNAWFLAGYGNKNVKVCVVDSGADIKHVDLNGNLYIPEYNEKYEMTQDFYNFMVKNPTDASGHGTHVTGIIGGVANDLGVVGVAPNITLISLRFIDGKKYGGSFHAIKALNVCILNKAPIINASWGSSHFDVNLHLAVERLKYTLNGKGSVLIAASGNKSNDNDISPLYPATFTFPHVYSVASISRNFEISPFSNYGHKSVHILAPGHHIYSTIPNNSYKIFTGTSMAAPHVCGVSALVYSVCYNQGFIPQAEEVLDILTRTSIKIISTKKRTINDSLVNAEGAVLTTLLGGLWMQMDCYFVKFNLEKGKKKHIPVVFSAYKKGVYETDIVIAIIPIDGKSKIYGEIHIPIKIVTDVNIPNFQESPRRGKNYTIDSNEAQHDEVLSYICENALYNLYEYDSHYLLASVILFFLALLSIFVGMIYMKSRKHSDKKCSKNLMKSNYIPEMDDGMEETQQLQQERRQYFRELFGENLEKNYDQHFVQDFGQDFRQDFKLGSTPDLKQYSDIDLQNKIQQPERKTVKIIINNFEDRKKETKRRLLKGLNYDGENAKKHDFTNESISNSRKNFKFSNNTEMKKNTIKSEDVKIASDDNVNKAMNQLDDMFMK.

Residues 1-18 (MLNIIYVVSLILIKFIFY) form the signal peptide. The propeptide at 19-687 (KECNNNNNYY…KLYNNKYSFL (669 aa)) is inhibition peptide. 2 disordered regions span residues 85–111 (EKKT…ENEI) and 143–171 (ADVS…NYKN). N-linked (GlcNAc...) asparagine glycans are attached at residues Asn165, Asn343, Asn451, Asn455, and Asn493. The segment at 415 to 474 (KKSKKEKENTQQKGGNNPNVDINILNNNNNNNNNNNNNSNNNSNSMNDEEINYNNNNNKE) is disordered. The span at 430–474 (NNPNVDINILNNNNNNNNNNNNNSNNNSNSMNDEEINYNNNNNKE) shows a compositional bias: low complexity. Residues 500–531 (IYHNKNDNSYKNKKEGTGKNNDNNDPNNNNNK) form a disordered region. Positions 503-516 (NKNDNSYKNKKEGT) are enriched in basic and acidic residues. The span at 518–531 (KNNDNNDPNNNNNK) shows a compositional bias: low complexity. Asn551, Asn642, and Asn729 each carry an N-linked (GlcNAc...) asparagine glycan. Over 688 to 1137 (NKFLNIEPLI…LYNLYEYDSH (450 aa)) the chain is Extracellular. The Peptidase S8 domain occupies 727–1020 (TWNLSIIRVF…DSLVNAEGAV (294 aa)). Catalysis depends on charge relay system residues Asp755 and His798. N-linked (GlcNAc...) asparagine glycans are attached at residues Asn821, Asn857, Asn893, and Asn951. Catalysis depends on Ser961, which acts as the Charge relay system. N-linked (GlcNAc...) asparagine glycosylation is found at Asn1010 and Asn1106. The helical transmembrane segment at 1138–1158 (YLLASVILFFLALLSIFVGMI) threads the bilayer. Over 1159-1342 (YMKSRKHSDK…MNQLDDMFMK (184 aa)) the chain is Cytoplasmic.

It belongs to the peptidase S8 family. Post-translationally, proteolytically cleaved at the N-terminus to generate a 74kDa intermediate which is further processed into a 72kDa form. The first maturation cleavage is autocatalytic, occurs in the ER and is necessary for the subsequent SUB2 trafficking to the microneme. The second cleavage may be mediated by PMX/plasmepsin X.

The protein localises to the cell membrane. Its subcellular location is the cytoplasmic vesicle. It localises to the secretory vesicle. The protein resides in the microneme membrane. It catalyses the reaction Hydrolysis of proteins with broad specificity for peptide bonds, and a preference for a large uncharged residue in P1. Hydrolyzes peptide amides.. With respect to regulation, activation may be calcium-dependent. Inhibited by the non-covalent interaction with the cleaved propeptide. In terms of biological role, serine protease which plays an essential role in the shedding of AMA1, MSP1 and MSP7 from the surface of the invading merozoite; this step is essential for productive invasion and the release of the adhesion between the erythrocyte and the merozoite. May cleave TRAMP/PTTRAMP, thereby shedding TRAMP from the merozoite surface during erythrocyte invasion. In Plasmodium falciparum, this protein is Subtilisin-like protease 2.